Consider the following 310-residue polypeptide: Aminoacyl tRNA synthase complex-interacting multifunctional protein 1 (310 aa).

N-acetylalanine is present on A2. A required for fibroblast proliferation region spans residues 6 to 46 (AVLKRLEQKGAEADQIIEYLKQQVALLKEKAILQATMREEK). Residues 54 to 192 (KLKKEIEELK…APRTVVSGLV (139 aa)) are interaction with HSP90B1. Residues 92–110 (ASESVVQSPSVATTASPAT) are compositionally biased toward polar residues. Residues 92–147 (ASESVVQSPSVATTASPATKEQIKAGEEKKVKEKTEKKGEKKEKQQSAAASTDSKP) form a disordered region. A required for endothelial cell death region spans residues 101–115 (SVATTASPATKEQIK). Positions 112–136 (EQIKAGEEKKVKEKTEKKGEKKEKQ) are enriched in basic and acidic residues. A required for endothelial cell migration region spans residues 115–190 (KAGEEKKVKE…EAAPRTVVSG (76 aa)). S138 carries the phosphoserine modification. The 102-residue stretch at 149–250 (DASRLDLRIG…NGSVPGDRIT (102 aa)) folds into the tRNA-binding domain. At K267 the chain carries N6-succinyllysine.

As to quaternary structure, homodimer. Part of the multisynthetase complex (MSC), a multisubunit complex that groups tRNA ligases for Arg (RARS1), Asp (DARS1), Gln (QARS1), Ile (IARS1), Leu (LARS1), Lys (KARS1), Met (MARS1) the bifunctional ligase for Glu and Pro (EPRS1) and the auxiliary subunits AIMP1/p43, AIMP2/p38 and EEF1E1/p18. Interacts (via N-terminus) with RARS1 (via N-terminus). Part of a complex composed of RARS1, QARS1 and AIMP1. Interacts (via C-terminus) with SMURF2. Interacts (via N-terminus) with HSP90B1/gp96 (via C-terminus). Interacts with PSMA7. Interacts with TARS3. Post-translationally, cleaved by caspase-7 in response to apoptosis to produce EMAP-II. In terms of tissue distribution, highly expressed in salivary glands and pancreatic alpha cells in the adult (at protein level). In the embryo, expressed primarily at sites of tissue remodeling such as ganglia, developing bones and teeth.

Its subcellular location is the nucleus. It is found in the cytoplasm. The protein localises to the cytosol. It localises to the secreted. The protein resides in the endoplasmic reticulum. Its subcellular location is the golgi apparatus. Functionally, non-catalytic component of the multisynthase complex. Stimulates the catalytic activity of cytoplasmic arginyl-tRNA synthase. Binds tRNA. Possesses inflammatory cytokine activity. Negatively regulates TGF-beta signaling through stabilization of SMURF2 by binding to SMURF2 and inhibiting its SMAD7-mediated degradation. Involved in glucose homeostasis through induction of glucagon secretion at low glucose levels. Promotes dermal fibroblast proliferation and wound repair. Regulates KDELR1-mediated retention of HSP90B1/gp96 in the endoplasmic reticulum. Plays a role in angiogenesis by inducing endothelial cell migration at low concentrations and endothelian cell apoptosis at high concentrations. Induces maturation of dendritic cells and monocyte cell adhesion. Modulates endothelial cell responses by degrading HIF-1A through interaction with PSMA7. The chain is Aminoacyl tRNA synthase complex-interacting multifunctional protein 1 (Aimp1) from Mus musculus (Mouse).